The sequence spans 600 residues: DDB1- and CUL4-associated factor 15 (600 aa).

The interval Met-1–Gly-30 is disordered. Over residues Ala-13–Arg-27 the composition is skewed to gly residues. Residue Ser-50 is modified to Phosphoserine. 4 residues coordinate Zn(2+): Cys-193, Cys-196, Cys-211, and His-214. E7820 is bound by residues Phe-231 and Ala-234 to Phe-235. Positions Pro-280 to Leu-295 are enriched in pro residues. Positions Pro-280 to Ala-316 are disordered. Ser-310 and Ser-314 each carry phosphoserine.

In terms of assembly, component of the DCX(DCAF15) complex, also named CLR4(DCAF15) complex, composed of DCAF15, DDB1, cullin-4 (CUL4A or CUL4B), DDA1 and RBX1.

Its pathway is protein modification; protein ubiquitination. With respect to regulation, aryl sulfonamide anticancer drugs change the substrate specificity of DCAF15 by acting as a molecular glue that promotes binding between DCAF15 and weak affinity interactors, such as RBM39. Functionally, substrate-recognition component of the DCX(DCAF15) complex, a cullin-4-RING E3 ubiquitin-protein ligase complex that mediates ubiquitination and degradation of target proteins. The DCX(DCAF15) complex acts as a regulator of the natural killer (NK) cells effector functions, possibly by mediating ubiquitination and degradation of cohesin subunits SMC1A and SMC3. May play a role in the activation of antigen-presenting cells (APC) and their interaction with NK cells. Binding of aryl sulfonamide anticancer drugs, such as indisulam (E7070) or E7820, change the substrate specificity of the DCX(DCAF15) complex, leading to promote ubiquitination and degradation of splicing factor RBM39. RBM39 degradation results in splicing defects and death in cancer cell lines. Aryl sulfonamide anticancer drugs change the substrate specificity of DCAF15 by acting as a molecular glue that promotes binding between DCAF15 and weak affinity interactor RBM39. Aryl sulfonamide anticancer drugs also promote ubiquitination and degradation of RBM23 and PRPF39. The protein is DDB1- and CUL4-associated factor 15 of Homo sapiens (Human).